The primary structure comprises 371 residues: Protein IQ-DOMAIN 7 (371 aa).

The tract at residues M1 to K32 is disordered. The span at P17–S29 shows a compositional bias: basic and acidic residues. IQ domains lie at R93–R121 and I122–A144. The segment at I125 to C141 is calmodulin-binding. Disordered regions lie at residues S285–F308 and L327–S371. 2 stretches are compositionally biased toward polar residues: residues S297–F308 and L327–S341.

Belongs to the IQD family. In terms of assembly, binds to multiple calmodulin (CaM) in the presence of Ca(2+) and CaM-like proteins.

It localises to the nucleus. The protein localises to the nucleus envelope. The protein resides in the cytoplasm. Its subcellular location is the cytoskeleton. Functionally, may be involved in cooperative interactions with calmodulins or calmodulin-like proteins. Recruits calmodulin proteins to microtubules, thus being a potential scaffold in cellular signaling and trafficking. May associate with nucleic acids and regulate gene expression at the transcriptional or post-transcriptional level. This is Protein IQ-DOMAIN 7 from Arabidopsis thaliana (Mouse-ear cress).